A 118-amino-acid chain; its full sequence is Beta-2-microglobulin (118 aa).

An N-terminal signal peptide occupies residues Met-1–Ala-20. Positions Pro-25 to Lys-113 constitute an Ig-like C1-type domain. A disulfide bond links Cys-45 and Cys-99.

This sequence belongs to the beta-2-microglobulin family. In terms of assembly, heterodimer of an alpha chain and a beta chain. Beta-2-microglobulin is the beta-chain of major histocompatibility complex class I molecules.

It is found in the secreted. Component of the class I major histocompatibility complex (MHC). Involved in the presentation of peptide antigens to the immune system. This chain is Beta-2-microglobulin (B2M), found in Felis catus (Cat).